Consider the following 537-residue polypeptide: CTP synthase (537 aa).

The amidoligase domain stretch occupies residues 1 to 265 (MTKFIFVTGG…GKYLVKRLGL (265 aa)). Serine 13 provides a ligand contact to CTP. Residue serine 13 participates in UTP binding. 14-19 (GLGKGI) contributes to the ATP binding site. Tyrosine 54 serves as a coordination point for L-glutamine. Aspartate 71 is an ATP binding site. Residues aspartate 71 and glutamate 139 each coordinate Mg(2+). Residues 146-148 (DIE), 186-191 (KTKPTQ), and lysine 222 each bind CTP. Residues 186 to 191 (KTKPTQ) and lysine 222 contribute to the UTP site. In terms of domain architecture, Glutamine amidotransferase type-1 spans 290–532 (EIAIVGKYVK…VKAAKEYKQE (243 aa)). Glycine 351 is a binding site for L-glutamine. The active-site Nucleophile; for glutamine hydrolysis is cysteine 378. L-glutamine contacts are provided by residues 379 to 382 (FGFQ), glutamate 402, and arginine 459. Active-site residues include histidine 505 and glutamate 507.

Belongs to the CTP synthase family. Homotetramer.

It carries out the reaction UTP + L-glutamine + ATP + H2O = CTP + L-glutamate + ADP + phosphate + 2 H(+). It catalyses the reaction L-glutamine + H2O = L-glutamate + NH4(+). The enzyme catalyses UTP + NH4(+) + ATP = CTP + ADP + phosphate + 2 H(+). Its pathway is pyrimidine metabolism; CTP biosynthesis via de novo pathway; CTP from UDP: step 2/2. Its activity is regulated as follows. Allosterically activated by GTP, when glutamine is the substrate; GTP has no effect on the reaction when ammonia is the substrate. The allosteric effector GTP functions by stabilizing the protein conformation that binds the tetrahedral intermediate(s) formed during glutamine hydrolysis. Inhibited by the product CTP, via allosteric rather than competitive inhibition. Its function is as follows. Catalyzes the ATP-dependent amination of UTP to CTP with either L-glutamine or ammonia as the source of nitrogen. Regulates intracellular CTP levels through interactions with the four ribonucleotide triphosphates. This Pyrococcus abyssi (strain GE5 / Orsay) protein is CTP synthase.